Consider the following 505-residue polypeptide: MAATTAAVVAEEDTELRDLLVQTLENSGVLNRIKAELRAAVFLALEEQEKVEVKILVEFLIDNCFEIFGENIRTRSRITSDDSLEHTDSSDVSTLQNDSAYDSNDPDVEPTSGAASPNRQLEGPTPTMAGLDTRGHRDTCESSSESSVSMVVRLKNSIVQQDRRFSEPNMSPSRECLVGPTSKQKLTRSEDSFTLSQDASCSEGDEAEDPFTEEVFPAVDSKPKRPVDLKIKNWTQGLASPQGHITKAFSRSSPGESLGSSPVPSPSCPKRNFFTRHQSFTTKTDKTKPQREIRKHSMLFSFASHKKVLPRTSSIGSEKSKDFSRDQLQKDLRKESQLSGRIVQENESEIQSQTSLGFSLSGTWALSVDNTFQLVDMRKPGSPPSYEEAIYYQTSGLTAYGGQTVGSMRSRMFKPSTAVPPVPSHHGGDLSEGTPGGHRLSSVTEHWTHSQTVHVSIETQGRSELHQLRTVSESMQKAKLDCLGPQHSHLVFEADQLCCARESYI.

5 disordered regions span residues 81-147 (DDSL…SESS), 160-212 (QQDR…DPFT), 242-293 (QGHI…QREI), 311-339 (RTSS…SQLS), and 414-441 (KPST…HRLS). Positions 90 to 102 (SDVSTLQNDSAYD) are enriched in polar residues. Positions 203–212 (EGDEAEDPFT) are enriched in acidic residues. Over residues 250–262 (SRSSPGESLGSSP) the composition is skewed to low complexity. 2 stretches are compositionally biased toward basic and acidic residues: residues 283–292 (KTDKTKPQRE) and 318–336 (EKSK…RKES).

The protein is T-cell activation GTPase-activating protein 1 (Tagap1) of Mus musculus (Mouse).